The following is a 305-amino-acid chain: Oxygen-dependent coproporphyrinogen-III oxidase (305 aa).

A substrate-binding site is contributed by serine 99. 2 residues coordinate a divalent metal cation: histidine 103 and histidine 113. Catalysis depends on histidine 113, which acts as the Proton donor. Position 115 to 117 (115 to 117 (NVR)) interacts with substrate. Histidine 152 and histidine 182 together coordinate a divalent metal cation. The interval 247–282 (YVEFNLVLDRGTLFGLQTGGRTESILMSMPPLARWE) is important for dimerization. Position 265 to 267 (265 to 267 (GGR)) interacts with substrate.

The protein belongs to the aerobic coproporphyrinogen-III oxidase family. As to quaternary structure, homodimer. Requires a divalent metal cation as cofactor.

Its subcellular location is the cytoplasm. It catalyses the reaction coproporphyrinogen III + O2 + 2 H(+) = protoporphyrinogen IX + 2 CO2 + 2 H2O. It participates in porphyrin-containing compound metabolism; protoporphyrin-IX biosynthesis; protoporphyrinogen-IX from coproporphyrinogen-III (O2 route): step 1/1. Functionally, involved in the heme biosynthesis. Catalyzes the aerobic oxidative decarboxylation of propionate groups of rings A and B of coproporphyrinogen-III to yield the vinyl groups in protoporphyrinogen-IX. The sequence is that of Oxygen-dependent coproporphyrinogen-III oxidase from Vibrio cholerae serotype O1 (strain M66-2).